A 630-amino-acid chain; its full sequence is Probable potassium transport system protein Kup 2 (630 aa).

12 helical membrane-spanning segments follow: residues 17–37 (FWAL…TSPL), 56–76 (VIVL…VTAK), 108–128 (VFLM…SMIT), 145–165 (PALE…LFAF), 176–196 (AFGP…LIHI), 214–234 (FMLS…LAVT), 255–275 (WLFF…ALVL), 293–313 (FLVP…QAVI), 345–365 (IYLP…VLLF), 375–395 (YGIA…VVIW), 402–422 (PAAA…FFSA), and 427–447 (LLEG…LIWV).

It belongs to the HAK/KUP transporter (TC 2.A.72) family.

Its subcellular location is the cell inner membrane. The enzyme catalyses K(+)(in) + H(+)(in) = K(+)(out) + H(+)(out). Transport of potassium into the cell. Likely operates as a K(+):H(+) symporter. The sequence is that of Probable potassium transport system protein Kup 2 from Rhodopseudomonas palustris (strain BisB18).